The sequence spans 346 residues: Elongation factor Ts (346 aa).

The segment at Thr-80–Val-83 is involved in Mg(2+) ion dislocation from EF-Tu.

The protein belongs to the EF-Ts family.

The protein localises to the cytoplasm. Associates with the EF-Tu.GDP complex and induces the exchange of GDP to GTP. It remains bound to the aminoacyl-tRNA.EF-Tu.GTP complex up to the GTP hydrolysis stage on the ribosome. The sequence is that of Elongation factor Ts (tsf) from Streptococcus pneumoniae (strain ATCC BAA-255 / R6).